Here is a 387-residue protein sequence, read N- to C-terminus: Acyltransferase MdmB (387 aa).

The next 10 helical transmembrane spans lie at 8–28 (LPSLTGLRWFAALAVFACHIA), 45–65 (ITTLGSIAVSVFFLLSGFVLA), 85–105 (IYPLHLVTFLIAGVIIFSLAE), 139–161 (TPSWSLSCEFAFYLTFPLWYRLV), 170–190 (WWCAAGIAAAVICVPFVTSQF), 209–229 (CWLPPVRMLEFVLGIVMALIL), 236–256 (GPGVVSSALLLAAAYGVTQVV), 258–278 (PMFTIAACSIVPAALLITALA), 292–312 (AVLVRLGEWSFAFYLVHFMVI), and 336–356 (ALALAMLAVAIVAGGLLHTVV).

Belongs to the acyltransferase 3 family.

It is found in the cell membrane. In terms of biological role, catalyzes the acylation of the mycaminose sugar during midecamycin biosynthesis. This Streptomyces mycarofaciens protein is Acyltransferase MdmB (mdmB).